The following is a 403-amino-acid chain: Argininosuccinate synthase (403 aa).

ATP-binding positions include 12–20 (AYSGGLDTS) and Ala39. Tyr91 and Ser96 together coordinate L-citrulline. Gly121 provides a ligand contact to ATP. Thr123, Asn127, and Asp128 together coordinate L-aspartate. Asn127 serves as a coordination point for L-citrulline. L-citrulline is bound by residues Arg131, Ser180, Ser189, Glu265, and Tyr277.

Belongs to the argininosuccinate synthase family. Type 1 subfamily. Homotetramer.

The protein resides in the cytoplasm. It carries out the reaction L-citrulline + L-aspartate + ATP = 2-(N(omega)-L-arginino)succinate + AMP + diphosphate + H(+). It participates in amino-acid biosynthesis; L-arginine biosynthesis; L-arginine from L-ornithine and carbamoyl phosphate: step 2/3. The chain is Argininosuccinate synthase from Vibrio vulnificus (strain CMCP6).